Consider the following 635-residue polypeptide: Threonine--tRNA ligase (635 aa).

The TGS domain occupies 1–61; that stretch reads MIVITLPDGS…EGDARLAIVT (61 aa). The tract at residues 242 to 533 is catalytic; it reads DHRKLGRELD…LIEQHAGALP (292 aa). Zn(2+) contacts are provided by C333, H384, and H510.

It belongs to the class-II aminoacyl-tRNA synthetase family. As to quaternary structure, homodimer. Zn(2+) is required as a cofactor.

It is found in the cytoplasm. The enzyme catalyses tRNA(Thr) + L-threonine + ATP = L-threonyl-tRNA(Thr) + AMP + diphosphate + H(+). Functionally, catalyzes the attachment of threonine to tRNA(Thr) in a two-step reaction: L-threonine is first activated by ATP to form Thr-AMP and then transferred to the acceptor end of tRNA(Thr). Also edits incorrectly charged L-seryl-tRNA(Thr). This Methylibium petroleiphilum (strain ATCC BAA-1232 / LMG 22953 / PM1) protein is Threonine--tRNA ligase.